Reading from the N-terminus, the 247-residue chain is MGPPLWPDLQEPPPPGTSSQIRSPLLCDVIKPAPHHDVTVRVVPPPRFLPLLLRPLPSDGDIAMRRDRGPKPALGGAGEVEPGGMAASPTGRPRRLQRYLQSGEFDQFRDFPIFESNFVQFCPDIYPAPTSDLWPQVTRLGEVANEVTMGVAASSPALELPDLLLLAGPAKENGHLQLFGLFPLKFVQLFVHDKSRCQLEVKLNTSRTFYLQLRAPLKTRDREFGQWVRLLYRLRFLSASAVPFTQE.

Residues 1–16 (MGPPLWPDLQEPPPPG) are compositionally biased toward pro residues. 2 disordered regions span residues 1-22 (MGPP…SQIR) and 60-92 (GDIA…PTGR).

Belongs to the GARIN family. As to quaternary structure, interacts (via N-terminus) with RAB2B (in GTP-bound form).

Its subcellular location is the golgi apparatus. Its function is as follows. RAB2B effector protein which promotes cytosolic DNA-induced innate immune responses. Regulates IFN responses against DNA viruses by regulating the CGAS-STING signaling axis. The protein is Golgi-associated RAB2 interactor protein 5A of Homo sapiens (Human).